A 538-amino-acid polypeptide reads, in one-letter code: Syncytin-2 (538 aa).

The N-terminal stretch at 1–15 (MGLLLLVLILTPSLA) is a signal peptide. Residues 16 to 478 (AYRHPDFPLL…GWLNWEGTWK (463 aa)) are Extracellular-facing. A CXXC motif is present at residues 43–46 (CWLC). Intrachain disulfides connect Cys43-Cys46, Cys43-Cys439, and Cys431-Cys438. Asn133, Asn146, Asn177, Asn220, Asn241, Asn247, Asn312, and Asn332 each carry an N-linked (GlcNAc...) asparagine glycan. Residues 354-374 (FIPLLAGLGILAGTGTGIAGI) form a fusion peptide region. A CKS-17 motif is present at residues 414–430 (LQNRRGLDMLTAAQGGI). The short motif at 431–439 (CLALDEKCC) is the CX6CC element. Asn443 carries N-linked (GlcNAc...) asparagine glycosylation. The chain crosses the membrane as a helical span at residues 479–499 (WFSWVLPLTGPLVSLLLLLLF). The Cytoplasmic segment spans residues 500–538 (GPCLLNLITQFVSSRLQAIKLQTNLSAGRRPRNIQESPF).

This sequence belongs to the gamma type-C retroviral envelope protein family. HERV class-I FRD env subfamily. In terms of assembly, the surface and transmembrane proteins form a heterodimer. They are attached by non-covalent interactions or by a labile interchain disulfide bond. Specific enzymatic cleavages in vivo yield the mature SU and TM proteins. In terms of processing, the CXXC motif is highly conserved across a broad range of retroviral envelope proteins. It is thought to participate in the formation of a labile disulfide bond possibly with the CX6CC motif present in the transmembrane protein.

The protein localises to the virion. Its subcellular location is the cell membrane. This endogenous retroviral envelope protein has retained its original fusogenic properties and participates in trophoblast fusion and the formation of a syncytium during placenta morphogenesis. The interaction with MFSD2A is apparently important for this process. In terms of biological role, endogenous envelope proteins may have kept, lost or modified their original function during evolution but this one can still make pseudotypes with MLV, HIV-1 or SIV-1 virions and confer infectivity. Retroviral envelope proteins mediate receptor recognition and membrane fusion during early infection. The surface protein mediates receptor recognition, while the transmembrane protein anchors the envelope heterodimer to the viral membrane through one transmembrane domain. The other hydrophobic domain, called fusion peptide, mediates fusion of the viral membrane with the target cell membrane. This Gorilla gorilla gorilla (Western lowland gorilla) protein is Syncytin-2 (ERVFRD-1).